A 335-amino-acid chain; its full sequence is Leukocyte cell-derived chemotaxin 1 (335 aa).

A helical transmembrane segment spans residues 45-65 (VVLISGAVLLLLGAIGAFYFW). One can recognise a BRICHOS domain in the interval 104 to 201 (GSGAEEAVEV…LCGDLPIFWL (98 aa)). A disulfide bond links cysteine 131 and cysteine 193. Positions 211-214 (RERR) are excised as a propeptide. A disordered region spans residues 221–269 (VTTTTTRRLRSGPQGTPAPGRPNNGTRPSVQEDAEPFNPDNPYHQQEGE). An N-linked (GlcNAc...) asparagine; in variant 223-N-E-224 glycan is attached at threonine 223. A glycan (O-linked (GalNAc...) threonine; partial) is linked at threonine 236. Asparagine 244 is a glycosylation site (N-linked (GlcNAc...) asparagine). 4 disulfide bridges follow: cysteine 283–cysteine 287, cysteine 284–cysteine 324, cysteine 294–cysteine 318, and cysteine 298–cysteine 314.

The protein belongs to the chondromodulin-1 family. After cleavage, the post-translationally modified ChM-I is secreted as a glycoprotein. Post-translationally, two other smaller nonglycosylated chondromodulin forms (9 kDa and 7 kDa) are found either in developing articular cartilage or in chondrocytes. The 9 kDa form could be processed by an extracellular matrix-associated protease as a metalloproteinase and the 7 kDa form could be processed intracellularly. Nasal and articular cartilage, and fetal epiphysis.

It localises to the secreted. It is found in the extracellular space. The protein resides in the extracellular matrix. Its subcellular location is the endomembrane system. Functionally, bifunctional growth regulator that stimulates the growth of cultured chondrocytes in the presence of basic fibroblast growth factor (FGF) but inhibits the growth of cultured vascular endothelial cells. May contribute to the rapid growth of cartilage and vascular invasion prior to the replacement of cartilage by bone during endochondral bone development. Inhibits in vitro tube formation and mobilization of endothelial cells. Plays a role as antiangiogenic factor in cardiac valves to suppress neovascularization. This chain is Leukocyte cell-derived chemotaxin 1, found in Bos taurus (Bovine).